A 124-amino-acid chain; its full sequence is Small ribosomal subunit protein uS12 (124 aa).

3-methylthioaspartic acid is present on D89.

It belongs to the universal ribosomal protein uS12 family. In terms of assembly, part of the 30S ribosomal subunit. Contacts proteins S8 and S17. May interact with IF1 in the 30S initiation complex.

Functionally, with S4 and S5 plays an important role in translational accuracy. Interacts with and stabilizes bases of the 16S rRNA that are involved in tRNA selection in the A site and with the mRNA backbone. Located at the interface of the 30S and 50S subunits, it traverses the body of the 30S subunit contacting proteins on the other side and probably holding the rRNA structure together. The combined cluster of proteins S8, S12 and S17 appears to hold together the shoulder and platform of the 30S subunit. This is Small ribosomal subunit protein uS12 from Aeromonas hydrophila subsp. hydrophila (strain ATCC 7966 / DSM 30187 / BCRC 13018 / CCUG 14551 / JCM 1027 / KCTC 2358 / NCIMB 9240 / NCTC 8049).